Consider the following 93-residue polypeptide: MVKIRLTRVGAKNKPAYRIVAMDSREPRDGKHLEILGFYDPKTDPATIQLKEERILYWLSQGAQPTDTVLSILKKYGVWDKFLAMKTSAKSSA.

Belongs to the bacterial ribosomal protein bS16 family.

The protein is Small ribosomal subunit protein bS16 of Dictyoglomus thermophilum (strain ATCC 35947 / DSM 3960 / H-6-12).